Here is a 359-residue protein sequence, read N- to C-terminus: tRNA-specific 2-thiouridylase MnmA (359 aa).

Residues 7–14 and Met33 contribute to the ATP site; that span reads AMSGGVDS. Catalysis depends on Cys101, which acts as the Nucleophile. The cysteines at positions 101 and 198 are disulfide-linked. Gly125 contributes to the ATP binding site. Positions 148 to 150 are interaction with tRNA; the sequence is KDQ. Cys198 (cysteine persulfide intermediate) is an active-site residue.

This sequence belongs to the MnmA/TRMU family.

It localises to the cytoplasm. It catalyses the reaction S-sulfanyl-L-cysteinyl-[protein] + uridine(34) in tRNA + AH2 + ATP = 2-thiouridine(34) in tRNA + L-cysteinyl-[protein] + A + AMP + diphosphate + H(+). Its function is as follows. Catalyzes the 2-thiolation of uridine at the wobble position (U34) of tRNA, leading to the formation of s(2)U34. This chain is tRNA-specific 2-thiouridylase MnmA, found in Chloroflexus aggregans (strain MD-66 / DSM 9485).